The primary structure comprises 495 residues: Surface E' protein (495 aa).

A helical transmembrane segment spans residues 224-235 (GTLIGLVALIGV).

The protein resides in the cell membrane. This chain is Surface E' protein (cbbE'), found in Coxiella burnetii.